A 63-amino-acid chain; its full sequence is Cytochrome c oxidase subunit 7C, mitochondrial (63 aa).

A mitochondrion-targeting transit peptide spans 1–16; sequence MLGQSIRRFTTSVVRR. Residues 17–33 are Mitochondrial matrix-facing; sequence SHYEEGPGKNIPFSVEN. Lys-25 is modified (N6-acetyllysine; alternate). N6-succinyllysine; alternate is present on Lys-25. Residues 34–60 traverse the membrane as a helical segment; that stretch reads KWRLLAMMTLFFGSGFAAPFFIVRHQL. The Mitochondrial intermembrane portion of the chain corresponds to 61–63; it reads LKK.

Belongs to the cytochrome c oxidase VIIc family. In terms of assembly, component of the cytochrome c oxidase (complex IV, CIV), a multisubunit enzyme composed of 14 subunits. The complex is composed of a catalytic core of 3 subunits MT-CO1, MT-CO2 and MT-CO3, encoded in the mitochondrial DNA, and 11 supernumerary subunits COX4I1 (or COX4I2), COX5A, COX5B, COX6A2 (or COX6A1), COX6B1 (or COX6B2), COX6C, COX7A1 (or COX7A2), COX7B, COX7C, COX8B and NDUFA4, which are encoded in the nuclear genome. The complex exists as a monomer or a dimer and forms supercomplexes (SCs) in the inner mitochondrial membrane with NADH-ubiquinone oxidoreductase (complex I, CI) and ubiquinol-cytochrome c oxidoreductase (cytochrome b-c1 complex, complex III, CIII), resulting in different assemblies (supercomplex SCI(1)III(2)IV(1) and megacomplex MCI(2)III(2)IV(2)). Interacts with RAB5IF. Liver, heart, muscle and brain, contain the same isoform of COX VIIc, but at different concentrations.

Its subcellular location is the mitochondrion inner membrane. The protein operates within energy metabolism; oxidative phosphorylation. In terms of biological role, component of the cytochrome c oxidase, the last enzyme in the mitochondrial electron transport chain which drives oxidative phosphorylation. The respiratory chain contains 3 multisubunit complexes succinate dehydrogenase (complex II, CII), ubiquinol-cytochrome c oxidoreductase (cytochrome b-c1 complex, complex III, CIII) and cytochrome c oxidase (complex IV, CIV), that cooperate to transfer electrons derived from NADH and succinate to molecular oxygen, creating an electrochemical gradient over the inner membrane that drives transmembrane transport and the ATP synthase. Cytochrome c oxidase is the component of the respiratory chain that catalyzes the reduction of oxygen to water. Electrons originating from reduced cytochrome c in the intermembrane space (IMS) are transferred via the dinuclear copper A center (CU(A)) of subunit 2 and heme A of subunit 1 to the active site in subunit 1, a binuclear center (BNC) formed by heme A3 and copper B (CU(B)). The BNC reduces molecular oxygen to 2 water molecules using 4 electrons from cytochrome c in the IMS and 4 protons from the mitochondrial matrix. In Bos taurus (Bovine), this protein is Cytochrome c oxidase subunit 7C, mitochondrial (COX7C).